A 466-amino-acid chain; its full sequence is Putative multidrug resistance protein MdtD (466 aa).

A run of 14 helical transmembrane segments spans residues 11-31 (LWIVAFGFFMQTLDTTIVNTA), 48-68 (SVIVSYVLTVAVMLPASGWLA), 71-91 (IGVKNIFFAAILLFTLGSLLC), 105-125 (VIQGIGGAMMVPVGRLTVMKI), 137-157 (FVTLPGQIGPLMGPALGGFLV), 164-184 (WIFLINLPVGIIGALATWFLM), 194-214 (FDISGFLWLAVGMATLTLALD), 218-238 (SLGIPPIAIFALITVGLIALL), 262-282 (FSIGLTGGLLARIGSGMLPFM), 286-306 (FLQLGMGFSPFHAGLMMVPMV), 328-347 (VLIVSTLLLALVTALFALVA), 351-370 (WIWMIPIVLFFLGMVNAIRF), 403-423 (LGVSIAGILLGMFSQPHMAAG), and 429-449 (MVFIYTYLSMIVIIALPALIF).

Belongs to the major facilitator superfamily. TCR/Tet family.

It is found in the cell inner membrane. This Pectobacterium carotovorum subsp. carotovorum (strain PC1) protein is Putative multidrug resistance protein MdtD.